Reading from the N-terminus, the 313-residue chain is Thiamine thiazole synthase (313 aa).

Substrate contacts are provided by residues A71, 92-93, G100, and V165; that span reads EA. C199 bears the 2,3-didehydroalanine (Cys) mark. Substrate is bound by residues D201, H216, M268, and 278-280; that span reads RMG.

It belongs to the THI4 family. Homooctamer. It depends on Fe cation as a cofactor. Post-translationally, during the catalytic reaction, a sulfide is transferred from Cys-199 to a reaction intermediate, generating a dehydroalanine residue.

The protein resides in the cytoplasm. It is found in the nucleus. It carries out the reaction [ADP-thiazole synthase]-L-cysteine + glycine + NAD(+) = [ADP-thiazole synthase]-dehydroalanine + ADP-5-ethyl-4-methylthiazole-2-carboxylate + nicotinamide + 3 H2O + 2 H(+). Its function is as follows. Involved in biosynthesis of the thiamine precursor thiazole. Catalyzes the conversion of NAD and glycine to adenosine diphosphate 5-(2-hydroxyethyl)-4-methylthiazole-2-carboxylic acid (ADT), an adenylated thiazole intermediate. The reaction includes an iron-dependent sulfide transfer from a conserved cysteine residue of the protein to a thiazole intermediate. The enzyme can only undergo a single turnover, which suggests it is a suicide enzyme. May have additional roles in adaptation to various stress conditions and in DNA damage tolerance. The sequence is that of Thiamine thiazole synthase from Coprinopsis cinerea (strain Okayama-7 / 130 / ATCC MYA-4618 / FGSC 9003) (Inky cap fungus).